Reading from the N-terminus, the 701-residue chain is A-type ATP synthase subunit I (701 aa).

10 helical membrane passes run 340–360, 363–379, 388–408, 435–455, 468–488, 498–518, 555–575, 583–603, 612–632, and 649–669; these read WEIS…GLMF, FGNA…FYRY, IPKL…TGLL, LYNL…LLPF, MIFS…LGVI, FLFL…FIFM, GIVW…AILV, WGSA…LLLL, VLVF…MAYL, and IIIL…VVFI.

Belongs to the V-ATPase 116 kDa subunit family. As to quaternary structure, has multiple subunits with at least A(3), B(3), C, D, E, F, H, I and proteolipid K(x).

It is found in the cell membrane. In terms of biological role, component of the A-type ATP synthase that produces ATP from ADP in the presence of a proton gradient across the membrane. The protein is A-type ATP synthase subunit I of Saccharolobus solfataricus (strain ATCC 35092 / DSM 1617 / JCM 11322 / P2) (Sulfolobus solfataricus).